The sequence spans 195 residues: Transcription factor LBX2 (195 aa).

2 disordered regions span residues 1 to 89 (MNSV…KSRT) and 164 to 195 (PALP…QVDD). A DNA-binding region (homeobox) is located at residues 84 to 143 (RRKSRTAFTAQQVLELERRFVFQKYLAPSERDGLAARLGLANAQVVTWFQNRRAKLKRDV). Positions 186-195 (LSDEEIQVDD) are enriched in acidic residues.

In terms of tissue distribution, expressed in the developing urogenital system, eye and brain.

The protein resides in the nucleus. Its function is as follows. Transcription factor. The chain is Transcription factor LBX2 (Lbx2) from Mus musculus (Mouse).